A 282-amino-acid polypeptide reads, in one-letter code: Bifunctional protein FolD (282 aa).

Residues 164–166, Ile-189, and Ile-230 contribute to the NADP(+) site; that span reads GAS.

This sequence belongs to the tetrahydrofolate dehydrogenase/cyclohydrolase family. In terms of assembly, homodimer.

It carries out the reaction (6R)-5,10-methylene-5,6,7,8-tetrahydrofolate + NADP(+) = (6R)-5,10-methenyltetrahydrofolate + NADPH. It catalyses the reaction (6R)-5,10-methenyltetrahydrofolate + H2O = (6R)-10-formyltetrahydrofolate + H(+). It functions in the pathway one-carbon metabolism; tetrahydrofolate interconversion. In terms of biological role, catalyzes the oxidation of 5,10-methylenetetrahydrofolate to 5,10-methenyltetrahydrofolate and then the hydrolysis of 5,10-methenyltetrahydrofolate to 10-formyltetrahydrofolate. This Campylobacter jejuni subsp. doylei (strain ATCC BAA-1458 / RM4099 / 269.97) protein is Bifunctional protein FolD.